An 843-amino-acid polypeptide reads, in one-letter code: General transcription and DNA repair factor IIH helicase/translocase subunit XPB/SSL2 (843 aa).

Residues 1–85 form a disordered region; it reads MTDVEGYQPK…TAADSSMNQM (85 aa). The segment covering 26–41 has biased composition (acidic residues); that stretch reads SDEDSPATDAEIDENY. The span at 42 to 56 shows a compositional bias: basic and acidic residues; that stretch reads DDNRETSEGRGERDT. Basic residues predominate over residues 64-74; sequence KKPRKKTKSSR. The Nuclear localization signal motif lies at 64–75; that stretch reads KKPRKKTKSSRH. A Helicase ATP-binding domain is found at 373–535; that stretch reads MFGNGRARSG…DLNFLIGPKL (163 aa). An ATP-binding site is contributed by 386–393; the sequence is LPCGAGKT. The DEAH box motif lies at 488-491; it reads DEVH. One can recognise a Helicase C-terminal domain in the interval 589 to 743; it reads QACQFLIQYH…KVITHLHGME (155 aa). Ser752 carries the post-translational modification Phosphoserine.

This sequence belongs to the helicase family. RAD25/XPB subfamily. In terms of assembly, component of the 7-subunit TFIIH core complex composed of XPB/SSL2, XPD/RAD3, SSL1, TFB1, TFB2, TFB4 and TFB5, which is active in NER. The core complex associates with the 3-subunit CTD-kinase module TFIIK composed of CCL1, KIN28 and TFB3 to form the 10-subunit holoenzyme (holo-TFIIH) active in transcription. An additionnal subunit, TFB6, plays a role in the dissociation of the SSL2 helicase from TFIIH after transcription initiation. Interacts directly with TFB6. Mg(2+) is required as a cofactor.

The protein resides in the nucleus. The enzyme catalyses Couples ATP hydrolysis with the unwinding of duplex DNA by translocating in the 3'-5' direction.. It carries out the reaction ATP + H2O = ADP + phosphate + H(+). Its function is as follows. ATP-dependent DNA translocase. Component of the general transcription and DNA repair factor IIH (TFIIH) core complex. When complexed to CDK-activating kinase (CAK), involved in RNA transcription by RNA polymerase II. May have 3'-5' helicase activity alone, the TFIIH core however has no 3'-5' helicase activity. Also involved in transcription-coupled nucleotide excision repair (NER) of damaged DNA. In NER, TFIIH acts by opening DNA around the lesion to allow the excision of the damaged oligonucleotide and its replacement by a new DNA fragment. The ATPase activity of XPB/SSL2, but not its helicase activity, is required for DNA opening. In transcription, TFIIH has an essential role in transcription initiation. When the pre-initiation complex (PIC) has been established, TFIIH is required for promoter opening and promoter escape. The ATP-dependent helicase activity of XPB/SSL2 is required for promoter opening and promoter escape. XPB/SSL2 acts as a double-stranded DNA translocase, promoting DNA opening by tracking in a 5'-3' dirction along the nontemplate promoter strand, rotating and inserting DNA into the Pol II active site cleft, leading to DNA unwinding. A dsDNA-stimulated ATPase, dATP and ATP are equally good substrates. May also use this translocase mechanism during DNA repair rather than physically wedging open damaged DNA. The chain is General transcription and DNA repair factor IIH helicase/translocase subunit XPB/SSL2 from Saccharomyces cerevisiae (strain ATCC 204508 / S288c) (Baker's yeast).